Consider the following 131-residue polypeptide: Large ribosomal subunit protein mL60 (131 aa).

Residues 1–12 (MFGPFKLTSPVA) constitute a mitochondrion transit peptide.

The protein belongs to the mitochondrion-specific ribosomal protein mL60 family. Component of the mitochondrial large ribosomal subunit (mt-LSU). Mature yeast 74S mitochondrial ribosomes consist of a small (37S) and a large (54S) subunit. The 37S small subunit contains a 15S ribosomal RNA (15S mt-rRNA) and 34 different proteins. The 54S large subunit contains a 21S rRNA (21S mt-rRNA) and 46 different proteins.

The protein resides in the mitochondrion. Functionally, component of the mitochondrial ribosome (mitoribosome), a dedicated translation machinery responsible for the synthesis of mitochondrial genome-encoded proteins, including at least some of the essential transmembrane subunits of the mitochondrial respiratory chain. The mitoribosomes are attached to the mitochondrial inner membrane and translation products are cotranslationally integrated into the membrane. The polypeptide is Large ribosomal subunit protein mL60 (MRPL31) (Saccharomyces cerevisiae (strain ATCC 204508 / S288c) (Baker's yeast)).